Reading from the N-terminus, the 265-residue chain is Protein IL-40 (265 aa).

The signal sequence occupies residues 1-20; it reads MGLPGLFCLAVLAASSFSKA. N-linked (GlcNAc...) asparagine glycosylation is found at N86 and N132.

As to expression, expressed in fetal liver and bone marrow. Expressed in peripheral blood lymphocyte B cells.

The protein localises to the secreted. In terms of biological role, probable B cell-associated cytokine that plays a role in the regulation of humoral immune responses. Involved in lymphocyte B cell development and immunoglobulin/IgA production. This chain is Protein IL-40, found in Homo sapiens (Human).